The sequence spans 211 residues: Urease accessory protein UreG (211 aa).

11 to 18 (GPVGSGKT) is a GTP binding site.

The protein belongs to the SIMIBI class G3E GTPase family. UreG subfamily. In terms of assembly, homodimer. UreD, UreF and UreG form a complex that acts as a GTP-hydrolysis-dependent molecular chaperone, activating the urease apoprotein by helping to assemble the nickel containing metallocenter of UreC. The UreE protein probably delivers the nickel.

The protein localises to the cytoplasm. Its function is as follows. Facilitates the functional incorporation of the urease nickel metallocenter. This process requires GTP hydrolysis, probably effectuated by UreG. In Laribacter hongkongensis (strain HLHK9), this protein is Urease accessory protein UreG.